The sequence spans 70 residues: DNA gyrase inhibitor YacG (70 aa).

Zn(2+)-binding residues include cysteine 20, cysteine 23, cysteine 35, and cysteine 39.

This sequence belongs to the DNA gyrase inhibitor YacG family. Interacts with GyrB. Zn(2+) serves as cofactor.

In terms of biological role, inhibits all the catalytic activities of DNA gyrase by preventing its interaction with DNA. Acts by binding directly to the C-terminal domain of GyrB, which probably disrupts DNA binding by the gyrase. The sequence is that of DNA gyrase inhibitor YacG from Rhizobium etli (strain CIAT 652).